The primary structure comprises 142 residues: MVLSGSDKTNVKGIFSKIGGQAEDYGAEALERMFATFPQTKTYFPHFDVSPGSAQVKAHGKKVAAALVEAANHIDDIATALSKLSDLHAQKLRVDPVNFKLLGQCFLVVVAIHNPSALTPEVHASLDKFLCAVGNVLTAKYR.

A Globin domain is found at 2–142 (VLSGSDKTNV…VGNVLTAKYR (141 aa)). Histidine 59 lines the O2 pocket. Histidine 88 contacts heme b.

This sequence belongs to the globin family. As to quaternary structure, heterotetramer of two alpha chains and two beta chains. In terms of tissue distribution, red blood cells.

Its function is as follows. Involved in oxygen transport from the lung to the various peripheral tissues. The sequence is that of Hemoglobin subunit alpha-A (HBAA) from Ara ararauna (Blue-and-yellow macaw).